Consider the following 699-residue polypeptide: Polyribonucleotide nucleotidyltransferase (699 aa).

Residues D485 and D491 each contribute to the Mg(2+) site. Residues 552-611 (PRITTIKINPEKIRDVIGKGGAVIRALTEETGTTIELEDDGTVKIASNNGDATREAIRRI) form the KH domain. Residues 621 to 689 (GRLYTGKVIR…RQGRVRLSIK (69 aa)) form the S1 motif domain.

This sequence belongs to the polyribonucleotide nucleotidyltransferase family. As to quaternary structure, component of the RNA degradosome, which is a multiprotein complex involved in RNA processing and mRNA degradation. It depends on Mg(2+) as a cofactor.

The protein localises to the cytoplasm. The enzyme catalyses RNA(n+1) + phosphate = RNA(n) + a ribonucleoside 5'-diphosphate. Involved in mRNA degradation. Catalyzes the phosphorolysis of single-stranded polyribonucleotides processively in the 3'- to 5'-direction. This is Polyribonucleotide nucleotidyltransferase from Shewanella amazonensis (strain ATCC BAA-1098 / SB2B).